Consider the following 963-residue polypeptide: Phosphoenolpyruvate carboxylase (963 aa).

Serine 11 is subject to Phosphoserine. Residues histidine 172 and lysine 600 contribute to the active site.

Belongs to the PEPCase type 1 family. Homotetramer. Requires Mg(2+) as cofactor.

The protein resides in the cytoplasm. The catalysed reaction is oxaloacetate + phosphate = phosphoenolpyruvate + hydrogencarbonate. With respect to regulation, by light-reversible phosphorylation. In terms of biological role, through the carboxylation of phosphoenolpyruvate (PEP) it forms oxaloacetate, a four-carbon dicarboxylic acid source for the tricarboxylic acid cycle. The protein is Phosphoenolpyruvate carboxylase (PPC) of Picea abies (Norway spruce).